Here is a 97-residue protein sequence, read N- to C-terminus: Citrate lyase acyl carrier protein (97 aa).

Serine 14 carries the O-(phosphoribosyl dephospho-coenzyme A)serine modification.

This sequence belongs to the CitD family. As to quaternary structure, oligomer with a subunit composition of (alpha,beta,gamma)6.

The protein localises to the cytoplasm. Covalent carrier of the coenzyme of citrate lyase. In Yersinia enterocolitica serotype O:8 / biotype 1B (strain NCTC 13174 / 8081), this protein is Citrate lyase acyl carrier protein.